A 463-amino-acid polypeptide reads, in one-letter code: ATP synthase subunit beta (463 aa).

152 to 159 serves as a coordination point for ATP; it reads GGAGVGKT.

The protein belongs to the ATPase alpha/beta chains family. In terms of assembly, F-type ATPases have 2 components, CF(1) - the catalytic core - and CF(0) - the membrane proton channel. CF(1) has five subunits: alpha(3), beta(3), gamma(1), delta(1), epsilon(1). CF(0) has three main subunits: a(1), b(2) and c(9-12). The alpha and beta chains form an alternating ring which encloses part of the gamma chain. CF(1) is attached to CF(0) by a central stalk formed by the gamma and epsilon chains, while a peripheral stalk is formed by the delta and b chains.

The protein localises to the cell inner membrane. The enzyme catalyses ATP + H2O + 4 H(+)(in) = ADP + phosphate + 5 H(+)(out). Produces ATP from ADP in the presence of a proton gradient across the membrane. The catalytic sites are hosted primarily by the beta subunits. The polypeptide is ATP synthase subunit beta (Shewanella sp. (strain ANA-3)).